The sequence spans 206 residues: Ras-related protein RABG3e (206 aa).

15–22 (GDSGVGKT) serves as a coordination point for GTP. Residues 37-45 (YKATIGADF) carry the Effector region motif. Residues 63-67 (DTAGQ), 125-128 (NKID), and 158-159 (SA) contribute to the GTP site. Residues cysteine 204 and cysteine 206 are each lipidated (S-geranylgeranyl cysteine). Residue cysteine 206 is modified to Cysteine methyl ester.

The protein belongs to the small GTPase superfamily. Rab family.

The protein resides in the cell membrane. Functionally, intracellular vesicle trafficking and protein transport. May play a role in adaptation to stress by recylcing macromolecules in specific cellular compartments. This chain is Ras-related protein RABG3e (RABG3E), found in Arabidopsis thaliana (Mouse-ear cress).